The following is a 233-amino-acid chain: Small ribosomal subunit protein uS5 (233 aa).

Basic and acidic residues-rich tracts occupy residues 1 to 12 (MANESEIQKTEN) and 39 to 54 (RGRD…RNEE). Residues 1–54 (MANESEIQKTENAEVANAANGTNPNNERRGRGGRGRGGRGRDGRGRRDDRRNEE) are disordered. The S5 DRBM domain occupies 59–122 (LIEKLVHINR…AAAKKTMIRV (64 aa)).

This sequence belongs to the universal ribosomal protein uS5 family. In terms of assembly, part of the 30S ribosomal subunit. Contacts proteins S4 and S8.

Its function is as follows. With S4 and S12 plays an important role in translational accuracy. In terms of biological role, located at the back of the 30S subunit body where it stabilizes the conformation of the head with respect to the body. The sequence is that of Small ribosomal subunit protein uS5 from Zymomonas mobilis subsp. mobilis (strain ATCC 31821 / ZM4 / CP4).